The chain runs to 175 residues: Lipoprotein signal peptidase (175 aa).

Transmembrane regions (helical) follow at residues leucine 25–valine 45, valine 56–alanine 76, tryptophan 81–leucine 101, and phenylalanine 110–valine 130. Active-site residues include aspartate 136 and aspartate 154. A helical transmembrane segment spans residues histidine 146–valine 166.

This sequence belongs to the peptidase A8 family.

The protein resides in the cell inner membrane. It carries out the reaction Release of signal peptides from bacterial membrane prolipoproteins. Hydrolyzes -Xaa-Yaa-Zaa-|-(S,diacylglyceryl)Cys-, in which Xaa is hydrophobic (preferably Leu), and Yaa (Ala or Ser) and Zaa (Gly or Ala) have small, neutral side chains.. It functions in the pathway protein modification; lipoprotein biosynthesis (signal peptide cleavage). In terms of biological role, this protein specifically catalyzes the removal of signal peptides from prolipoproteins. This is Lipoprotein signal peptidase from Cupriavidus necator (strain ATCC 17699 / DSM 428 / KCTC 22496 / NCIMB 10442 / H16 / Stanier 337) (Ralstonia eutropha).